Consider the following 121-residue polypeptide: Large ribosomal subunit protein bL19 (121 aa).

The protein belongs to the bacterial ribosomal protein bL19 family.

This protein is located at the 30S-50S ribosomal subunit interface and may play a role in the structure and function of the aminoacyl-tRNA binding site. This chain is Large ribosomal subunit protein bL19, found in Chlamydia caviae (strain ATCC VR-813 / DSM 19441 / 03DC25 / GPIC) (Chlamydophila caviae).